Here is a 308-residue protein sequence, read N- to C-terminus: Pycsar effector protein PaPycTIR (308 aa).

A nucleoside 3',5'-cyclic phosphate is bound at residue leucine 54–arginine 143. Residues valine 160–tyrosine 278 are TIR-like.

It localises to the cytoplasm. It catalyses the reaction NAD(+) + H2O = ADP-D-ribose + nicotinamide + H(+). Functionally, pycsar (pyrimidine cyclase system for antiphage resistance) provides immunity against bacteriophage. The pyrimidine cyclase (PycC) synthesizes cyclic nucleotides in response to infection; these serve as specific second messenger signals. The signals activate the adjacent effector, leading to bacterial cell death and abortive phage infection. A clade A Pycsar system. The effector gene of a two-gene Pycsar system. Expression of this and adjacent uridylate cyclase PaPycC (AC P0DV40) probably confers resistance to bacteriophage. The genes are probably only expressed in response to bacteriophage infection. Probably only responds to cUMP (produced by its cognate NTP cyclase), acts by depleting cellular NAD(+) levels. This Pseudomonas aeruginosa protein is Pycsar effector protein PaPycTIR.